A 152-amino-acid polypeptide reads, in one-letter code: Deoxyuridine 5'-triphosphate nucleotidohydrolase (152 aa).

Substrate contacts are provided by residues 71 to 73 (RSG), Asn-84, and 88 to 90 (TID).

This sequence belongs to the dUTPase family. Requires Mg(2+) as cofactor.

The enzyme catalyses dUTP + H2O = dUMP + diphosphate + H(+). Its pathway is pyrimidine metabolism; dUMP biosynthesis; dUMP from dCTP (dUTP route): step 2/2. Functionally, this enzyme is involved in nucleotide metabolism: it produces dUMP, the immediate precursor of thymidine nucleotides and it decreases the intracellular concentration of dUTP so that uracil cannot be incorporated into DNA. The polypeptide is Deoxyuridine 5'-triphosphate nucleotidohydrolase (Roseobacter denitrificans (strain ATCC 33942 / OCh 114) (Erythrobacter sp. (strain OCh 114))).